The primary structure comprises 696 residues: Two-component response regulator ORR22 (696 aa).

In terms of domain architecture, Response regulatory spans 27–142 (RVLAVDDDPV…ELRNIWQHVV (116 aa)). D78 is subject to 4-aspartylphosphate. Positions 154 to 214 (LDFSKECNKP…DYQENDEPSA (61 aa)) are disordered. Polar residues predominate over residues 176 to 185 (TCGSSDQNGR). The span at 195-211 (GEDDDEGDDNDYQENDE) shows a compositional bias: acidic residues. Positions 214 to 273 (AAKKPRVVWSVELHRKFVAAVNQLGIDKAVPKRILELMNVEKLTRENVASHLQKYRLYLK) form a DNA-binding region, myb-like GARP.

It belongs to the ARR family. Type-B subfamily. Post-translationally, two-component system major event consists of a His-to-Asp phosphorelay between a sensor histidine kinase (HK) and a response regulator (RR). In plants, the His-to-Asp phosphorelay involves an additional intermediate named Histidine-containing phosphotransfer protein (HPt). This multistep phosphorelay consists of a His-Asp-His-Asp sequential transfer of a phosphate group between first a His and an Asp of the HK protein, followed by the transfer to a conserved His of the HPt protein and finally the transfer to an Asp in the receiver domain of the RR protein.

Its subcellular location is the nucleus. Its function is as follows. Transcriptional activator that binds specific DNA sequence. Functions as a response regulator involved in His-to-Asp phosphorelay signal transduction system. Phosphorylation of the Asp residue in the receiver domain activates the ability of the protein to promote the transcription of target genes. May directly activate some type-A response regulators in response to cytokinins. Functions as a response regulator in response to cytokinins. In Oryza sativa subsp. japonica (Rice), this protein is Two-component response regulator ORR22.